The sequence spans 792 residues: Terminal nucleotidyltransferase 4A (792 aa).

The tract at residues 55–191 (GAAGRGSGGL…QFHPGRRKRE (137 aa)) is disordered. Low complexity-rich tracts occupy residues 80-97 (APAA…PAAE) and 105-139 (SPSL…ASLG). Mg(2+)-binding residues include Asp-297 and Asp-299. Residues Gly-360, Lys-385, Ser-403, and Tyr-404 each contribute to the ATP site. In terms of domain architecture, PAP-associated spans 428-486 (NLGMLLVEFFELYGRNFNYLKTGIRIKEGGAYIAKEEIMKAMTSGYRPSMLCIEDPLLP). The ATP site is built by Asn-488 and Arg-492. Positions 601–619 (QLLSSGSSASSVSSLSGSD) are enriched in low complexity. Disordered regions lie at residues 601 to 632 (QLLS…TPSV) and 737 to 792 (MKGS…SLSR). A compositionally biased stretch (gly residues) spans 744–756 (TQGGGYSSVGSGG). Positions 764–781 (RGHHQYNRTGWRRKKHTH) are enriched in basic residues.

Belongs to the DNA polymerase type-B-like family. Component of a nuclear TRAMP-like complex, an ATP-dependent exosome regulatory complex consisting of a helicase (MTREX), an oligadenylate polymerase (TENT4B or TENT4A), and a substrate specific RNA-binding factor (ZCCHC7 or ZCCHC8). Several TRAMP-like complexes exist with specific compositions and are associated with nuclear, or nucleolar RNA exosomes. The cofactor is Mg(2+). It depends on Mn(2+) as a cofactor.

It is found in the cytoplasm. It localises to the nucleus. Its subcellular location is the nucleoplasm. It carries out the reaction RNA(n) + ATP = RNA(n)-3'-adenine ribonucleotide + diphosphate. In terms of biological role, terminal nucleotidyltransferase that catalyzes preferentially the transfer of ATP and GTP on RNA 3' poly(A) tail creating a heterogeneous 3' poly(A) tail leading to mRNAs stabilization by protecting mRNAs from active deadenylation. Also functions as a catalytic subunit of a TRAMP-like complex which has a poly(A) RNA polymerase activity and is involved in a post-transcriptional quality control mechanism. Polyadenylation with short oligo(A) tails is required for the degradative activity of the exosome on several of its nuclear RNA substrates. Has no terminal uridylyltransferase activity, and does not play a role in replication-dependent histone mRNA degradation via uridylation. The sequence is that of Terminal nucleotidyltransferase 4A from Homo sapiens (Human).